The sequence spans 892 residues: Zinc finger protein 473 homolog (892 aa).

The KRAB domain maps to 23 to 101 (ETLKDLAMDF…TKSSPLQSGF (79 aa)). 2 stretches are compositionally biased toward polar residues: residues 66 to 76 (DTSQPSLTSQP) and 84 to 97 (ATST…SSPL). 2 disordered regions span residues 66-97 (DTSQ…SSPL) and 134-203 (GDPE…DSVQ). Composition is skewed to basic and acidic residues over residues 138–156 (SLPR…HQSP) and 190–203 (KESR…DSVQ). C2H2-type zinc fingers lie at residues 209–231 (YKCS…WVLH) and 265–287 (YTCQ…QKIH). The segment covering 297 to 308 (SDSNLEGLSRSP) has biased composition (polar residues). The disordered stretch occupies residues 297–370 (SDSNLEGLSR…HPKPLRHQKT (74 aa)). 2 stretches are compositionally biased toward basic and acidic residues: residues 313–323 (GKQRLSKDTDS) and 332–353 (QDQE…ESQP). 8 consecutive C2H2-type zinc fingers follow at residues 377 to 399 (FRCK…QRAH), 404 to 426 (YKCA…RKSH), 432 to 454 (CECQ…QAIH), 460 to 482 (YKCD…QRIH), 488 to 510 (HKCS…QRVH), 516 to 538 (HQCP…RLRH), 544 to 566 (FGCA…NKIH), and 572 to 594 (YECK…LSIH). Lys-476 participates in a covalent cross-link: Glycyl lysine isopeptide (Lys-Gly) (interchain with G-Cter in SUMO2). Lys-602 is covalently cross-linked (Glycyl lysine isopeptide (Lys-Gly) (interchain with G-Cter in SUMO2)). A C2H2-type 11; degenerate zinc finger spans residues 697–719 (FKCDIYNRAFKQRAHLSKHQLIH). 6 consecutive C2H2-type zinc fingers follow at residues 725 to 747 (FKCN…QKTH), 753 to 775 (FECS…QKIH), 781 to 803 (FKCG…QRIH), 809 to 831 (YVCQ…LRIH), 837 to 859 (YTCG…ERIH), and 865 to 887 (YACG…QRIH).

It belongs to the krueppel C2H2-type zinc-finger protein family. In terms of assembly, interacts with the SLBP/pre-mRNA complex but not with SLBP alone. Interacts with LSM11 in a U7 snRNP-dependent manner.

The protein resides in the nucleus. Involved in histone 3'-end pre-mRNA processing by associating with U7 snRNP and interacting with SLBP/pre-mRNA complex. Increases histone 3'-end pre-mRNA processing but has no effect on U7 snRNP levels, when overexpressed. Required for cell cycle progression from G1 to S phases. The sequence is that of Zinc finger protein 473 homolog (Znf473) from Mus musculus (Mouse).